Consider the following 271-residue polypeptide: Rhomboid-type serine protease 2 (271 aa).

The next 6 helical transmembrane spans lie at 16 to 36 (GLAVGLSIFLTALFLVNNLVY), 64 to 84 (HLSFFHLFFNVISTFSMIVMF), 89 to 111 (GTLYTGVILNLLAVFTAIPYCLI), 115 to 137 (LFPNVEIGGASGWFFSFLGYFAV), 152 to 172 (FSFPTLYFPVALLFVTALLAP), and 176 to 196 (LPGHAIGLLLGYFMGLKENWV). S125 functions as the Nucleophile in the catalytic mechanism. The active site involves H179. The disordered stretch occupies residues 252 to 271 (HNTDTPAEPTFQGNGRVLGN).

This sequence belongs to the peptidase S54 family.

It localises to the golgi apparatus membrane. The protein resides in the golgi apparatus. Its subcellular location is the cis-Golgi network membrane. It carries out the reaction Cleaves type-1 transmembrane domains using a catalytic dyad composed of serine and histidine that are contributed by different transmembrane domains.. Its function is as follows. Probable rhomboid-type serine protease that catalyzes intramembrane proteolysis. The protein is Rhomboid-type serine protease 2 (RBD2) of Kluyveromyces lactis (strain ATCC 8585 / CBS 2359 / DSM 70799 / NBRC 1267 / NRRL Y-1140 / WM37) (Yeast).